Reading from the N-terminus, the 528-residue chain is Zinc finger protein 16-like (528 aa).

The disordered stretch occupies residues 1–28 (MSRKRNHCYMETGASSESQGAFVDSAGP). Residues 79 to 106 (IRVLKMELREKSDEIELLKAKLESAEKD) are a coiled coil. Disordered regions lie at residues 159 to 202 (GAAE…TDAE) and 232 to 293 (FKGD…DRME). The segment covering 232 to 242 (FKGDSETKCED) has biased composition (basic and acidic residues). The span at 244-256 (PPMDEEDENEDSE) shows a compositional bias: acidic residues. 2 stretches are compositionally biased toward basic and acidic residues: residues 257-270 (EGRG…DHFP) and 278-293 (GEDR…DRME). The C2H2-type 1 zinc finger occupies 303 to 326 (FICPFCGTLCPDSSFLEEHIKLMH). Residues 333–345 (QSTSAGSSSQAEG) are compositionally biased toward low complexity. The interval 333–359 (QSTSAGSSSQAEGDSGEAGPASRGARE) is disordered. 4 consecutive C2H2-type zinc fingers follow at residues 366–388 (YECG…QRIH), 394–416 (FVCP…RLSH), 423–445 (FPCP…QRVH), and 451–473 (YACP…MRIH). Residues 479–501 (YTCYQCGRSFRHLGTYKSHRCMP) form a C2H2-type 6; degenerate zinc finger. Residues 502 to 528 (ATQMPSEHSPPWAQEDKVQTGRLQGYV) are disordered.

Belongs to the krueppel C2H2-type zinc-finger protein family.

The protein resides in the nucleus. Its function is as follows. Probable transcription factor. Important for development and migration of oligodendrocyte precursor cells, and normal myelination of axons in the central nervous system (CNS). Functions autonomously in oligodendrocytes to promote CNS myelination. Seems to act in parallel with notch3 during oligodendrocyte development. The protein is Zinc finger protein 16-like of Danio rerio (Zebrafish).